A 904-amino-acid polypeptide reads, in one-letter code: Thiamine diphosphate dependent-3-acetyloctanal synthase PigD (904 aa).

The segment at Arg-879 to Ser-904 is disordered. Over residues Gln-886–Ser-904 the composition is skewed to polar residues.

The protein belongs to the TPP enzyme family. Thiamine diphosphate serves as cofactor.

It catalyses the reaction (2E)-octenal + pyruvate + H(+) = (S)-3-acetyloctanal + CO2. It functions in the pathway antibiotic biosynthesis; prodigiosin biosynthesis. Functionally, involved in the biosynthesis of 2-methyl-3-n-amyl-pyrrole (MAP), one of the terminal products involved in the biosynthesis of the red antibiotic prodigiosin (Pig). Catalyzes the decarboxylation of pyruvate, followed by the modification of the resulting two-carbon fragment acetaldehyde at the C3 position of the 2-octenal (1,2-addition of acetaldehyde) giving 3-acetyloctanal. In vitro, it can act on a number of alpha,beta-unsaturated carbonyl compounds, including aldehydes and ketones, and can catalyze both 1,2-addition and Stetter-type 1,4-addition depending on the substrate. This is Thiamine diphosphate dependent-3-acetyloctanal synthase PigD from Serratia marcescens.